Reading from the N-terminus, the 478-residue chain is Sorting nexin-4 (478 aa).

Residues 1–10 show a composition bias toward basic and acidic residues; the sequence is MAVIDQHQDD. A disordered region spans residues 1–56; the sequence is MAVIDQHQDDFSNVSWNTDEHTAAESSSSVTATEFDDTERNGHNAYESDAPGSDGQ. Positions 24–33 are enriched in low complexity; that stretch reads AESSSSVTAT. Residues 58-180 form the PX domain; it reads VLDCVVSEPL…IFLESPDWNA (123 aa). Arginine 101, threonine 103, lysine 127, and arginine 146 together coordinate a 1,2-diacyl-sn-glycero-3-phospho-(1D-myo-inositol-3-phosphate). The disordered stretch occupies residues 459-478; that stretch reads EGVSGTRSTGVEPPGRRLAD.

This sequence belongs to the sorting nexin family. As to quaternary structure, interacts with the mitochondrial prohibitin complex subunits PHB1 and PHB2; the interaction is direct and plays a role in mitophagy.

It localises to the cytoplasm. The protein localises to the cytosol. It is found in the preautophagosomal structure membrane. Its subcellular location is the endosome membrane. The protein resides in the mitochondrion membrane. It localises to the lipid droplet. Sorting nexin, involved in the separation or division of vacuoles throughout the entire life cycle of the cells. Involved in retrieval of late-Golgi SNAREs from post-Golgi endosomes to the trans-Golgi network, for cytoplasm to vacuole transport (Cvt), and autophagy of large cargos including mitophagy, pexophagy and glycophagy. Required for the switch to necrotrophic growth. This Colletotrichum higginsianum (strain IMI 349063) (Crucifer anthracnose fungus) protein is Sorting nexin-4.